The sequence spans 316 residues: Cobalamin biosynthesis protein CobD (316 aa).

5 consecutive transmembrane segments (helical) span residues 45-65 (FSPYLFGFFLWLTTVGLALGV), 78-100 (PVLYWLVWIYLAYASLAAKSLAF), 151-171 (DGVIGPLLCLFLGGPILAMTY), 209-229 (LTWLFLILSSQILLLDVKGAL), and 291-311 (ISLLYTSTMTGLILFTLFYLV).

This sequence belongs to the CobD/CbiB family.

Its subcellular location is the cell membrane. The protein operates within cofactor biosynthesis; adenosylcobalamin biosynthesis. Functionally, converts cobyric acid to cobinamide by the addition of aminopropanol on the F carboxylic group. The chain is Cobalamin biosynthesis protein CobD from Streptococcus sanguinis (strain SK36).